Reading from the N-terminus, the 238-residue chain is Purine nucleoside phosphorylase DeoD-type (238 aa).

Residue histidine 4 coordinates a purine D-ribonucleoside. Phosphate contacts are provided by residues glycine 20, arginine 24, arginine 43, and 87–90 (RVGS). A purine D-ribonucleoside is bound by residues 179-181 (EME) and 203-204 (SD). Aspartate 204 (proton donor) is an active-site residue.

The protein belongs to the PNP/UDP phosphorylase family. In terms of assembly, homohexamer; trimer of homodimers.

The enzyme catalyses a purine D-ribonucleoside + phosphate = a purine nucleobase + alpha-D-ribose 1-phosphate. It catalyses the reaction a purine 2'-deoxy-D-ribonucleoside + phosphate = a purine nucleobase + 2-deoxy-alpha-D-ribose 1-phosphate. Catalyzes the reversible phosphorolytic breakdown of the N-glycosidic bond in the beta-(deoxy)ribonucleoside molecules, with the formation of the corresponding free purine bases and pentose-1-phosphate. This chain is Purine nucleoside phosphorylase DeoD-type, found in Histophilus somni (strain 129Pt) (Haemophilus somnus).